A 523-amino-acid polypeptide reads, in one-letter code: Signal peptide peptidase-like 2A (523 aa).

A signal peptide spans 1 to 25 (MGLLHSLHAPAAALLWSCLLGLAAA). The Lumenal portion of the chain corresponds to 26 to 175 (QEAILHASTN…PSWPNFDYTL (150 aa)). Residues Asn-51, Asn-61, Asn-69, Asn-119, Asn-129, and Asn-135 are each glycosylated (N-linked (GlcNAc...) asparagine). The region spanning 70 to 155 (LTGTALCHLS…KDFKDMKETL (86 aa)) is the PA domain. A helical transmembrane segment spans residues 176–196 (VVIFVIAVFTVALGGYWSGLI). Residues 197–224 (ELENMKSVEDAEDRETRKKKDDYLTFSP) are Cytoplasmic-facing. A helical membrane pass occupies residues 225-245 (LTVVVFVVICCIMIVLLYFFY). The Lumenal segment spans residues 246-247 (RW). The helical transmembrane segment at 248–268 (LVYVMIAIFCIASSMSLYNCL) threads the bilayer. The Cytoplasmic portion of the chain corresponds to 269-288 (SALIHRMPCGQCTILCCGKN). Residues 289–309 (IKVSLIFLSGLCISVAVVWAV) form a helical membrane-spanning segment. Over 310 to 315 (FRNEDR) the chain is Lumenal. Residues 316 to 336 (WAWILQDILGIAFCLNLIKTM) form a helical membrane-spanning segment. Residues 337–344 (KLPNFMSC) are Cytoplasmic-facing. The helical transmembrane segment at 345–365 (VILLGLLLIYDVFFVFITPFI) threads the bilayer. Asp-355 is an active-site residue. Residues 366 to 403 (TKNGESIMVELAAGPFENAEKLPVVIRVPKLMGYSVMS) lie on the Lumenal side of the membrane. The helical transmembrane segment at 404–424 (VCSVPVSVLGFGDIIVPGLLI) threads the bilayer. Residue Asp-416 is part of the active site. The Cytoplasmic portion of the chain corresponds to 425–440 (AYCRRFDVQTGSSIYY). A helical transmembrane segment spans residues 441–461 (ISSTIAYAVGMIITFVVLMVM). At 462–463 (KT) the chain is on the lumenal side. The chain crosses the membrane as a helical span at residues 464-484 (GQPALLYLVPCTLITVSVVAW). Residues 466–468 (PAL) carry the PAL motif. At 485 to 523 (SRKEMKKFWKGSSYQVMDHLDYSTNEENPVTTDEQIVQQ) the chain is on the cytoplasmic side. The YXXo lysosomal targeting motif motif lies at 498–501 (YQVM).

The protein belongs to the peptidase A22B family. As to quaternary structure, interacts with ITM2B. In terms of processing, glycosylated.

The protein localises to the late endosome membrane. It localises to the lysosome membrane. It is found in the membrane. Functionally, intramembrane-cleaving aspartic protease (I-CLiP) that cleaves type II membrane signal peptides in the hydrophobic plane of the membrane. Functions in FASLG, ITM2B and TNF processing. Catalyzes the intramembrane cleavage of the anchored fragment of shed TNF-alpha (TNF), which promotes the release of the intracellular domain (ICD) for signaling to the nucleus. Also responsible for the intramembrane cleavage of Fas antigen ligand FASLG, which promotes the release of the intracellular FasL domain (FasL ICD). Essential for degradation of the invariant chain CD74 that plays a central role in the function of antigen-presenting cells in the immune system. Plays a role in the regulation of innate and adaptive immunity. The sequence is that of Signal peptide peptidase-like 2A from Mus musculus (Mouse).